The chain runs to 134 residues: Phosphoribosyl-AMP cyclohydrolase (134 aa).

D80 lines the Mg(2+) pocket. C81 provides a ligand contact to Zn(2+). Mg(2+)-binding residues include D82 and D84. Zn(2+)-binding residues include C98 and C105.

Belongs to the PRA-CH family. As to quaternary structure, homodimer. It depends on Mg(2+) as a cofactor. Zn(2+) serves as cofactor.

It localises to the cytoplasm. It catalyses the reaction 1-(5-phospho-beta-D-ribosyl)-5'-AMP + H2O = 1-(5-phospho-beta-D-ribosyl)-5-[(5-phospho-beta-D-ribosylamino)methylideneamino]imidazole-4-carboxamide. It functions in the pathway amino-acid biosynthesis; L-histidine biosynthesis; L-histidine from 5-phospho-alpha-D-ribose 1-diphosphate: step 3/9. Its function is as follows. Catalyzes the hydrolysis of the adenine ring of phosphoribosyl-AMP. The polypeptide is Phosphoribosyl-AMP cyclohydrolase (Bordetella pertussis (strain Tohama I / ATCC BAA-589 / NCTC 13251)).